Here is an 80-residue protein sequence, read N- to C-terminus: MGGRLQLWRFLVGVKLTKLLIGHGFLEAVNDAGAVAIAAIAKAGRSLRRKLRFTVSHKGSNRFWWVSIGCICYSGQRPKA.

This is an uncharacterized protein from Synechococcus sp. (strain PCC 6716).